The primary structure comprises 331 residues: MSNKINPKRREPTAAAAAAVAAGVGGGVGGGASGVATANTNTTGSSSTGGSSSAGTTSSANTSSSSSSSLSSAGGGDAGMSADLTSLFECPVCFDYVLPPILQCSSGHLVCVSCRSKLTCCPTCRGPLANIRNLAMEKVASNVKFPCKHSGYGCTASLVYTEKTEHEETCECRPYLCPCPGASCKWQGPLDLVMQHLMMSHKSITTLQGEDIVFLATDINLPGAVDWVMMQSCFGHHFMLVLEKQEKYDGHQQFFAIVQLIGSRKEAENFVYRLELNGNRRRLTWEAMPRSIHEGVASAIHNSDCLVFDTSIAQLFADNGNLGINVTISLV.

The segment at 32 to 72 (ASGVATANTNTTGSSSTGGSSSAGTTSSANTSSSSSSSLSS) is disordered. Over residues 34–72 (GVATANTNTTGSSSTGGSSSAGTTSSANTSSSSSSSLSS) the composition is skewed to low complexity. Residues 90–125 (CPVCFDYVLPPILQCSSGHLVCVSCRSKLTCCPTCR) form an RING-type zinc finger. Positions 139-331 (VASNVKFPCK…LGINVTISLV (193 aa)) are SBD. An SIAH-type zinc finger spans residues 142-202 (NVKFPCKHSG…VMQHLMMSHK (61 aa)). Zn(2+) is bound by residues Cys-147, Cys-154, His-166, Cys-170, Cys-177, Cys-184, His-196, and His-201.

Belongs to the SINA (Seven in absentia) family. In terms of assembly, component of some E3 complex at least composed of sina, ebi and phyl. Interacts with eff.

The protein resides in the cytoplasm. It localises to the nucleus. The catalysed reaction is S-ubiquitinyl-[E2 ubiquitin-conjugating enzyme]-L-cysteine + [acceptor protein]-L-lysine = [E2 ubiquitin-conjugating enzyme]-L-cysteine + N(6)-ubiquitinyl-[acceptor protein]-L-lysine.. The protein operates within protein modification; protein ubiquitination. Functionally, E3 ubiquitin-protein ligase that is required for specification of R7 photoreceptor cell fate in the eye by mediating the ubiquitination and subsequent proteasomal degradation of Tramtrack (ttk). E3 Ubiquitin ligases accept ubiquitin from an E2 ubiquitin-conjugating enzyme in the form of a thioester and then directly transfers the ubiquitin to targeted substrates. Acts via the formation of a complex with ebi and phyl that ubiquitinates the transcription repressor ttk, a general inhibitor of photoreceptor differentiation, in a subset of photoreceptor cells in the eye, leading to the differentiation of cells into neurons. Also involved in external sensory organ development. The polypeptide is E3 ubiquitin-protein ligase sina (sina) (Drosophila willistoni (Fruit fly)).